Consider the following 396-residue polypeptide: S-adenosylmethionine synthase (396 aa).

H15 is a binding site for ATP. D17 lines the Mg(2+) pocket. K(+) is bound at residue E43. Residues E56 and Q99 each coordinate L-methionine. The interval Q99–R109 is flexible loop. ATP-binding positions include D175–K177, R241–F242, D250, R256–K257, A273, and K277. D250 contacts L-methionine. An L-methionine-binding site is contributed by K281.

It belongs to the AdoMet synthase family. Homotetramer; dimer of dimers. Mg(2+) serves as cofactor. Requires K(+) as cofactor.

It is found in the cytoplasm. It catalyses the reaction L-methionine + ATP + H2O = S-adenosyl-L-methionine + phosphate + diphosphate. The protein operates within amino-acid biosynthesis; S-adenosyl-L-methionine biosynthesis; S-adenosyl-L-methionine from L-methionine: step 1/1. Functionally, catalyzes the formation of S-adenosylmethionine (AdoMet) from methionine and ATP. The overall synthetic reaction is composed of two sequential steps, AdoMet formation and the subsequent tripolyphosphate hydrolysis which occurs prior to release of AdoMet from the enzyme. This Carboxydothermus hydrogenoformans (strain ATCC BAA-161 / DSM 6008 / Z-2901) protein is S-adenosylmethionine synthase.